Reading from the N-terminus, the 253-residue chain is Large ribosomal subunit protein uL2C (253 aa).

Belongs to the universal ribosomal protein uL2 family. In terms of assembly, component of the large ribosomal subunit (LSU). Mature yeast ribosomes consist of a small (40S) and a large (60S) subunit. The 40S small subunit contains 1 molecule of ribosomal RNA (18S rRNA) and at least 33 different proteins. The large 60S subunit contains 3 rRNA molecules (25S, 5.8S and 5S rRNA) and at least 46 different proteins.

It is found in the cytoplasm. It localises to the nucleus. Functionally, component of the ribosome, a large ribonucleoprotein complex responsible for the synthesis of proteins in the cell. The small ribosomal subunit (SSU) binds messenger RNAs (mRNAs) and translates the encoded message by selecting cognate aminoacyl-transfer RNA (tRNA) molecules. The large subunit (LSU) contains the ribosomal catalytic site termed the peptidyl transferase center (PTC), which catalyzes the formation of peptide bonds, thereby polymerizing the amino acids delivered by tRNAs into a polypeptide chain. The nascent polypeptides leave the ribosome through a tunnel in the LSU and interact with protein factors that function in enzymatic processing, targeting, and the membrane insertion of nascent chains at the exit of the ribosomal tunnel. This chain is Large ribosomal subunit protein uL2C (rpl803), found in Schizosaccharomyces pombe (strain 972 / ATCC 24843) (Fission yeast).